We begin with the raw amino-acid sequence, 475 residues long: Ataxin-10 (475 aa).

At Arg-10 the chain carries Omega-N-methylarginine. 2 positions are modified to phosphoserine: Ser-12 and Ser-77. Position 82 is a phosphothreonine (Thr-82). A Phosphoserine modification is found at Ser-430.

It belongs to the ataxin-10 family. Homooligomer. Interacts with GNB2. Interacts with IQCB1. Interacts with OGT. Post-translationally, polyubiquitinated. Phosphorylation at Ser-12 by AURKB promotes the association of ATXN10 with PLK1. Phosphorylation at Ser-77 and Thr-82 by PLK1 may play a role in the regulation of cytokinesis and may stimulate the proteasome-mediated degradation of ATXN10.

It localises to the cytoplasm. The protein localises to the perinuclear region. The protein resides in the cytoskeleton. Its subcellular location is the cilium basal body. It is found in the microtubule organizing center. It localises to the centrosome. The protein localises to the centriole. The protein resides in the midbody. Its function is as follows. May play a role in the regulation of cytokinesis. May play a role in signaling by stimulating protein glycosylation. Induces neuritogenesis by activating the Ras-MAP kinase pathway and is necessary for the survival of cerebellar neurons. Does not appear to play a major role in ciliogenesis. In Bos taurus (Bovine), this protein is Ataxin-10 (ATXN10).